The primary structure comprises 460 residues: MTNYAIILAAGKGTRMTSDLPKVLHKVSGLTMLEHVFRSVKAISPEKAVTVIGHKSEMVRAVLADQSAFVHQTEQLGTGHAVMMAETQLEGLEGHTLVIAGDTPLITGESLKSLIDFHVNHKNVATILTATAQDPFGYGRIVRNKDGEVIKIVEQKDANEYEQQLKEINTGTYVFDNKRLFEALKCITTNNAQGEYYLTDVVAIFRANKEKVGAYILRDFNESLGVNDRVALATAETVMRQRITQKHMVNGVTFQNPETVYIESDVTIAPDVLIEGNVTLKGRTHIGSGTVLTNGTYIVDSEIGDNCVVTNSMIESSVLAAGVTVGPYAHLRPGTTLDREVHIGNFVEVKGSHIGEKTKAGHLTYIGNAQVGSSVNVGAGTITVNYDGQNKYETVIGDHAFIGSNSTLIAPLEIGDHALTAAGSTISKTVPIDSIAIGRSRQVTKEGYAKRLAHHPSRSK.

Residues M1–R229 form a pyrophosphorylase region. UDP-N-acetyl-alpha-D-glucosamine-binding positions include L8–G11, K22, Q72, and G77–T78. D102 serves as a coordination point for Mg(2+). UDP-N-acetyl-alpha-D-glucosamine contacts are provided by G139, E154, N169, and N227. N227 contacts Mg(2+). The interval V230–N250 is linker. The segment at G251–K460 is N-acetyltransferase. UDP-N-acetyl-alpha-D-glucosamine is bound by residues R332 and K350. The active-site Proton acceptor is the H362. Residues Y365 and N376 each coordinate UDP-N-acetyl-alpha-D-glucosamine. Residues A379, N385 to Y386, S404, A422, and R439 contribute to the acetyl-CoA site.

In the N-terminal section; belongs to the N-acetylglucosamine-1-phosphate uridyltransferase family. This sequence in the C-terminal section; belongs to the transferase hexapeptide repeat family. In terms of assembly, homotrimer. It depends on Mg(2+) as a cofactor.

The protein localises to the cytoplasm. The catalysed reaction is alpha-D-glucosamine 1-phosphate + acetyl-CoA = N-acetyl-alpha-D-glucosamine 1-phosphate + CoA + H(+). It catalyses the reaction N-acetyl-alpha-D-glucosamine 1-phosphate + UTP + H(+) = UDP-N-acetyl-alpha-D-glucosamine + diphosphate. It functions in the pathway nucleotide-sugar biosynthesis; UDP-N-acetyl-alpha-D-glucosamine biosynthesis; N-acetyl-alpha-D-glucosamine 1-phosphate from alpha-D-glucosamine 6-phosphate (route II): step 2/2. The protein operates within nucleotide-sugar biosynthesis; UDP-N-acetyl-alpha-D-glucosamine biosynthesis; UDP-N-acetyl-alpha-D-glucosamine from N-acetyl-alpha-D-glucosamine 1-phosphate: step 1/1. Its pathway is bacterial outer membrane biogenesis; LPS lipid A biosynthesis. Catalyzes the last two sequential reactions in the de novo biosynthetic pathway for UDP-N-acetylglucosamine (UDP-GlcNAc). The C-terminal domain catalyzes the transfer of acetyl group from acetyl coenzyme A to glucosamine-1-phosphate (GlcN-1-P) to produce N-acetylglucosamine-1-phosphate (GlcNAc-1-P), which is converted into UDP-GlcNAc by the transfer of uridine 5-monophosphate (from uridine 5-triphosphate), a reaction catalyzed by the N-terminal domain. This is Bifunctional protein GlmU from Streptococcus pyogenes serotype M6 (strain ATCC BAA-946 / MGAS10394).